The following is an 88-amino-acid chain: Small ribosomal subunit protein bS18 (88 aa).

It belongs to the bacterial ribosomal protein bS18 family. As to quaternary structure, part of the 30S ribosomal subunit. Forms a tight heterodimer with protein bS6.

Functionally, binds as a heterodimer with protein bS6 to the central domain of the 16S rRNA, where it helps stabilize the platform of the 30S subunit. This chain is Small ribosomal subunit protein bS18, found in Syntrophus aciditrophicus (strain SB).